The chain runs to 152 residues: Ribonuclease H (152 aa).

The region spanning 4–145 (SRSMVEIFSD…CDELARQAIA (142 aa)) is the RNase H type-1 domain. Mg(2+) contacts are provided by Asp-13, Glu-51, Asp-73, and Asp-137.

It belongs to the RNase H family. In terms of assembly, monomer. Mg(2+) serves as cofactor.

It is found in the cytoplasm. The enzyme catalyses Endonucleolytic cleavage to 5'-phosphomonoester.. Functionally, endonuclease that specifically degrades the RNA of RNA-DNA hybrids. The sequence is that of Ribonuclease H from Syntrophotalea carbinolica (strain DSM 2380 / NBRC 103641 / GraBd1) (Pelobacter carbinolicus).